A 1070-amino-acid chain; its full sequence is [F-actin]-monooxygenase MICAL1 (1070 aa).

Positions 1-489 are monooxygenase domain; that stretch reads MASTISTNPA…RDLYDMEAKE (489 aa). FAD is bound by residues Cys95, 114 to 116, 121 to 123, Phe181, Tyr293, and Asp393; these read EKR and RHN. Thr475 bears the Phosphothreonine mark. The region spanning 508-612 is the Calponin-homology (CH) domain; the sequence is VGSQEELLRW…YLSHFHSAFK (105 aa). Residues 643–690 are disordered; that stretch reads QRTRTQENGEDAGGKKPRLEVKAETPSTEEPPVPKPDEPMTPPSQQQD. Basic and acidic residues predominate over residues 646–665; that stretch reads RTQENGEDAGGKKPRLEVKA. A compositionally biased stretch (pro residues) spans 671–684; sequence EEPPVPKPDEPMTP. An LIM zinc-binding domain is found at 695-757; it reads DLCALCGQHL…LQHLPQTGHE (63 aa). 8 residues coordinate Zn(2+): Cys697, Cys700, His718, Cys721, Cys724, Cys727, Cys747, and His750. Disordered regions lie at residues 754-838 and 865-887; these read TGHE…RSCS and MEMG…EDVP. The segment covering 755–766 has biased composition (basic and acidic residues); sequence GHEEDSSDRGPE. The segment covering 770 to 781 has biased composition (polar residues); the sequence is LPMSSENNTPSG. Phosphoserine occurs at positions 793, 875, and 876. The span at 876–887 shows a compositional bias: acidic residues; the sequence is SEEETEEEEDVP. Residues 904-1070 form an important for interaction with RAB8A region; it reads GTMNNYPTWR…ELASEPGVQG (167 aa). One can recognise a bMERB domain in the interval 921–1070; sequence KEEEMKRFCK…ELASEPGVQG (150 aa). Residues 928 to 1030 are a coiled coil; it reads FCKAQAIQRR…EETLKTAADR (103 aa). Residue Ser1060 is modified to Phosphoserine.

It belongs to the Mical family. In terms of assembly, interacts with STK38 and STK38L. Associates with the SH3 domain of NEDD9. Interacts with VIM and PLXNA3. Interacts with RAB1B, RAB8A, RAB10, RAB13 and RAB15 (in their GTP-bound forms); binding to RAB1B is of low affinity compared to other Rab proteins; at least in case of RAB8A and RAB10 can bind 2 molecules of the Rab proteins simultaneously. Interacts with GRAF1/ARHGAP26, GRAF2/ARHGAP10, RAB8A, RAB8B and RAB10; may bind simultaneously to GRAFs and Rabs and connects GRAFs to Rabs. Does not interact with RAB1 and RAB11A. Requires FAD as cofactor.

It is found in the cytoplasm. Its subcellular location is the cytoskeleton. It localises to the endosome membrane. The protein resides in the midbody. It catalyses the reaction L-methionyl-[F-actin] + NADPH + O2 + H(+) = L-methionyl-(R)-S-oxide-[F-actin] + NADP(+) + H2O. The enzyme catalyses NADPH + O2 + H(+) = H2O2 + NADP(+). Its function is as follows. Monooxygenase that promotes depolymerization of F-actin by mediating oxidation of specific methionine residues on actin to form methionine-sulfoxide, resulting in actin filament disassembly and preventing repolymerization. In the absence of actin, it also functions as a NADPH oxidase producing H(2)O(2). Acts as a cytoskeletal regulator that connects NEDD9 to intermediate filaments. Also acts as a negative regulator of apoptosis via its interaction with STK38 and STK38L; acts by antagonizing STK38 and STK38L activation by MST1/STK4. Involved in regulation of lamina-specific connectivity in the nervous system such as the development of lamina-restricted hippocampal connections. Through redox regulation of the actin cytoskeleton controls the intracellular distribution of secretory vesicles containing L1/neurofascin/NgCAM family proteins in neurons, thereby regulating their cell surface levels. May act as Rab effector protein and play a role in vesicle trafficking. Promotes endosomal tubule extension by associating with RAB8 (RAB8A or RAB8B), RAB10 and GRAF (GRAF1/ARHGAP26 or GRAF2/ARHGAP10) on the endosomal membrane which may connect GRAFs to Rabs, thereby participating in neosynthesized Rab8-Rab10-Rab11-dependent protein export. The polypeptide is [F-actin]-monooxygenase MICAL1 (MICAL1) (Bos taurus (Bovine)).